Reading from the N-terminus, the 270-residue chain is 25S rRNA adenine-N(1) methyltransferase (270 aa).

Positions 111 and 131 each coordinate S-adenosyl-L-methionine.

The protein belongs to the BMT2 family.

The protein localises to the nucleus. Its subcellular location is the nucleolus. Functionally, S-adenosyl-L-methionine-dependent methyltransferase that specifically methylates the N(1) position of an adenine present in helix 65 in 25S rRNA. The polypeptide is 25S rRNA adenine-N(1) methyltransferase (Schizosaccharomyces pombe (strain 972 / ATCC 24843) (Fission yeast)).